The primary structure comprises 269 residues: 5'-nucleotidase SurE (269 aa).

Residues Asp-11, Asp-12, Ser-43, and Asn-101 each contribute to the a divalent metal cation site.

The protein belongs to the SurE nucleotidase family. The cofactor is a divalent metal cation.

It is found in the cytoplasm. The enzyme catalyses a ribonucleoside 5'-phosphate + H2O = a ribonucleoside + phosphate. In terms of biological role, nucleotidase that shows phosphatase activity on nucleoside 5'-monophosphates. The sequence is that of 5'-nucleotidase SurE from Prochlorococcus marinus (strain MIT 9515).